A 152-amino-acid chain; its full sequence is MVKGVAVLSSSEGVSGTIYFTQEGDGPTTVTGNVSGLKPGPHGFHVHALGDTTNGCLSTGPHFNPAGKEHGAPDDEVRHAGDLGNVTVGEDGTAAFTIVDKQIPLTGPHSIIGRAVVVHADPDDLGKGGHELSKTTGNTGGRVACGINGLQG.

Positions 45, 47, and 62 each coordinate Cu cation. Cys56 and Cys145 are joined by a disulfide. Positions 62, 70, 79, and 82 each coordinate Zn(2+). Residue His119 participates in Cu cation binding.

Belongs to the Cu-Zn superoxide dismutase family. In terms of assembly, homodimer. The cofactor is Cu cation. Zn(2+) serves as cofactor.

Its subcellular location is the cytoplasm. It carries out the reaction 2 superoxide + 2 H(+) = H2O2 + O2. Functionally, destroys radicals which are normally produced within the cells and which are toxic to biological systems. This is Superoxide dismutase [Cu-Zn] (SODCC) from Paulownia kawakamii (Dragon tree).